The primary structure comprises 239 residues: 4-hydroxy-tetrahydrodipicolinate reductase (239 aa).

Residues 9–14 (GINGKM), 78–80 (GTT), and 104–107 (APNF) each bind NAD(+). H134 serves as the catalytic Proton donor/acceptor. H135 lines the (S)-2,3,4,5-tetrahydrodipicolinate pocket. The active-site Proton donor is K138. A (S)-2,3,4,5-tetrahydrodipicolinate-binding site is contributed by 144–145 (GT).

The protein belongs to the DapB family.

Its subcellular location is the cytoplasm. The enzyme catalyses (S)-2,3,4,5-tetrahydrodipicolinate + NAD(+) + H2O = (2S,4S)-4-hydroxy-2,3,4,5-tetrahydrodipicolinate + NADH + H(+). The catalysed reaction is (S)-2,3,4,5-tetrahydrodipicolinate + NADP(+) + H2O = (2S,4S)-4-hydroxy-2,3,4,5-tetrahydrodipicolinate + NADPH + H(+). The protein operates within amino-acid biosynthesis; L-lysine biosynthesis via DAP pathway; (S)-tetrahydrodipicolinate from L-aspartate: step 4/4. Functionally, catalyzes the conversion of 4-hydroxy-tetrahydrodipicolinate (HTPA) to tetrahydrodipicolinate. In Coxiella burnetii (strain Dugway 5J108-111), this protein is 4-hydroxy-tetrahydrodipicolinate reductase.